The sequence spans 435 residues: MIRKMSKNVVVIGTQWGDEGKGKIVDWLAESVQGVVRFQGGHNAGHTLWINGKKTILRLIPSGIMHDGVTCFIGNGVVLSPEALLREIEELEAAGLDVRSRLQVSEICTLILPYHVAVDKAREARKGEGKIGTTGRGIGPAYEDKVARRALRVQDLFNPALFDEKLAEVLDYHNFVLTQYLGAEPVSANEVRDQAMALAPALAPMVRDVSSNLFVLQQEGKNLLFEGAQGALLDVDHGTYPFVTSSNCVAGAASAGAGVGPQALQYVLGITKAYTTRVGSGPFPTELVDEIGTRLATIGKEFGSVTGRPRRCGWFDGAALKRSVRLNGISGLCITKLDVLDGLETIQLGVGYRVNGEFRDVLPYGAHAVAQAQAVLEELPGWTESTVGITEYSKLPVNARRYLERVAEVCGVPIDLVSTGPDRNETIVLRHPFKG.

GTP contacts are provided by residues 17 to 23 and 45 to 47; these read GDEGKGK and GHT. The Proton acceptor role is filled by aspartate 18. Mg(2+) is bound by residues aspartate 18 and glycine 45. Residues 18–21, 43–46, threonine 134, arginine 148, glutamine 229, threonine 244, and arginine 308 each bind IMP; these read DEGK and NAGH. The active-site Proton donor is the histidine 46. Substrate is bound at residue 304 to 310; the sequence is SVTGRPR. GTP-binding positions include arginine 310, 336–338, and 418–420; these read KLD and STG.

The protein belongs to the adenylosuccinate synthetase family. In terms of assembly, homodimer. It depends on Mg(2+) as a cofactor.

The protein resides in the cytoplasm. The catalysed reaction is IMP + L-aspartate + GTP = N(6)-(1,2-dicarboxyethyl)-AMP + GDP + phosphate + 2 H(+). It functions in the pathway purine metabolism; AMP biosynthesis via de novo pathway; AMP from IMP: step 1/2. Its function is as follows. Plays an important role in the de novo pathway of purine nucleotide biosynthesis. Catalyzes the first committed step in the biosynthesis of AMP from IMP. This Bordetella parapertussis (strain 12822 / ATCC BAA-587 / NCTC 13253) protein is Adenylosuccinate synthetase.